Consider the following 168-residue polypeptide: Protein-export protein SecB (168 aa).

It belongs to the SecB family. In terms of assembly, homotetramer, a dimer of dimers. One homotetramer interacts with 1 SecA dimer.

The protein localises to the cytoplasm. Its function is as follows. One of the proteins required for the normal export of preproteins out of the cell cytoplasm. It is a molecular chaperone that binds to a subset of precursor proteins, maintaining them in a translocation-competent state. It also specifically binds to its receptor SecA. The protein is Protein-export protein SecB of Rhizobium meliloti (strain 1021) (Ensifer meliloti).